Here is a 263-residue protein sequence, read N- to C-terminus: MDWGALQTILGGVNKHSTSIGKIWLTVLFIFRIMILVVAAERVWGDEQDDFICNTLQPGCKNVCYDHFFPISHIRLWALQLIFVSTPALLVAMHVAYRRHEKKRQFRKGDQKCEYKDIEEIRTQRFRIEGTLWWTYTCSIFFRLVFEAVFMYAFYFMYDGFRMPRLMKCSAWPCPNTVDCFVSRPTEKTVFTIFMIAVSSICILLNVAELCYLLTKFFLRRSRKAGNQKHHPNHENKEETKQNEMNELISDSCQNTVIGFTSS.

The Cytoplasmic segment spans residues 1–19; sequence MDWGALQTILGGVNKHSTS. Residues 20 to 40 form a helical membrane-spanning segment; that stretch reads IGKIWLTVLFIFRIMILVVAA. Residues 41–75 are Extracellular-facing; sequence ERVWGDEQDDFICNTLQPGCKNVCYDHFFPISHIR. The helical transmembrane segment at 76 to 96 threads the bilayer; sequence LWALQLIFVSTPALLVAMHVA. The Cytoplasmic segment spans residues 97–137; that stretch reads YRRHEKKRQFRKGDQKCEYKDIEEIRTQRFRIEGTLWWTYT. Residues 138–158 traverse the membrane as a helical segment; sequence CSIFFRLVFEAVFMYAFYFMY. Over 159–189 the chain is Extracellular; that stretch reads DGFRMPRLMKCSAWPCPNTVDCFVSRPTEKT. The helical transmembrane segment at 190–210 threads the bilayer; sequence VFTIFMIAVSSICILLNVAEL. The Cytoplasmic portion of the chain corresponds to 211-263; sequence CYLLTKFFLRRSRKAGNQKHHPNHENKEETKQNEMNELISDSCQNTVIGFTSS.

This sequence belongs to the connexin family. Beta-type (group I) subfamily. A connexon is composed of a hexamer of connexins. In terms of tissue distribution, exclusively expressed in the cochlea of the inner ear, where it is found in cells of the tegmentum vasculosum, cuboidal cells, supporting cells and clear cells.

Its subcellular location is the cell membrane. It is found in the cell junction. It localises to the gap junction. Its function is as follows. One gap junction consists of a cluster of closely packed pairs of transmembrane channels, the connexons, through which materials of low MW diffuse from one cell to a neighboring cell. The polypeptide is Gap junction beta-6 protein (GJB6) (Gallus gallus (Chicken)).